The sequence spans 97 residues: MSTPNALAAFNSSPSLNAPEGITNPPIDDLLEQVSSKYALVIYSAKRARQINDYYAQLGEGLLEYVGPLVEPGPREKPLSIALREIHAGVLEHTEGE.

Over residues Met1–Leu16 the composition is skewed to polar residues. The disordered stretch occupies residues Met1–Gly21.

This sequence belongs to the RNA polymerase subunit omega family. In terms of assembly, the RNAP catalytic core consists of 2 alpha, 1 beta, 1 beta' and 1 omega subunit. When a sigma factor is associated with the core the holoenzyme is formed, which can initiate transcription.

It catalyses the reaction RNA(n) + a ribonucleoside 5'-triphosphate = RNA(n+1) + diphosphate. In terms of biological role, promotes RNA polymerase assembly. Latches the N- and C-terminal regions of the beta' subunit thereby facilitating its interaction with the beta and alpha subunits. The chain is DNA-directed RNA polymerase subunit omega from Saccharopolyspora erythraea (strain ATCC 11635 / DSM 40517 / JCM 4748 / NBRC 13426 / NCIMB 8594 / NRRL 2338).